The primary structure comprises 108 residues: Insulin-1 (108 aa).

The first 24 residues, 1–24, serve as a signal peptide directing secretion; the sequence is MALLVHFLPLLALLALWEPKPTQA. Cystine bridges form between cysteine 31–cysteine 94, cysteine 43–cysteine 107, and cysteine 93–cysteine 98. Positions 57–85 are cleaved as a propeptide — c peptide; sequence EVEDPQVEQLELGGSPGDLQTLALEVARQ.

It belongs to the insulin family. In terms of assembly, heterodimer of a B chain and an A chain linked by two disulfide bonds.

The protein localises to the secreted. Insulin decreases blood glucose concentration. It increases cell permeability to monosaccharides, amino acids and fatty acids. It accelerates glycolysis, the pentose phosphate cycle, and glycogen synthesis in liver. The polypeptide is Insulin-1 (Ins1) (Mus musculus (Mouse)).